A 209-amino-acid polypeptide reads, in one-letter code: Thymidine kinase (209 aa).

Residues 25 to 32 (GCMFAGKT) and 103 to 106 (DEVQ) contribute to the ATP site. Glu-104 serves as the catalytic Proton acceptor. Positions 160, 163, 198, and 201 each coordinate Zn(2+).

Belongs to the thymidine kinase family. In terms of assembly, homotetramer.

The protein resides in the cytoplasm. The catalysed reaction is thymidine + ATP = dTMP + ADP + H(+). This Mycoplasma mycoides subsp. mycoides SC (strain CCUG 32753 / NCTC 10114 / PG1) protein is Thymidine kinase.